A 695-amino-acid chain; its full sequence is DNA ligase (695 aa).

NAD(+) is bound by residues 44 to 48, 93 to 94, and Glu123; these read DAEYD and SL. The N6-AMP-lysine intermediate role is filled by Lys125. Positions 146, 184, 300, and 324 each coordinate NAD(+). 4 residues coordinate Zn(2+): Cys418, Cys421, Cys436, and Cys442. Positions 605–694 constitute a BRCT domain; that stretch reads SAAKPLAGIT…PDAARSMAQR (90 aa).

Belongs to the NAD-dependent DNA ligase family. LigA subfamily. It depends on Mg(2+) as a cofactor. Mn(2+) serves as cofactor.

It catalyses the reaction NAD(+) + (deoxyribonucleotide)n-3'-hydroxyl + 5'-phospho-(deoxyribonucleotide)m = (deoxyribonucleotide)n+m + AMP + beta-nicotinamide D-nucleotide.. Functionally, DNA ligase that catalyzes the formation of phosphodiester linkages between 5'-phosphoryl and 3'-hydroxyl groups in double-stranded DNA using NAD as a coenzyme and as the energy source for the reaction. It is essential for DNA replication and repair of damaged DNA. The sequence is that of DNA ligase from Acidothermus cellulolyticus (strain ATCC 43068 / DSM 8971 / 11B).